The sequence spans 208 residues: CASP-like protein 2A1 (208 aa).

Residues 1 to 36 are Cytoplasmic-facing; sequence MSKMAEQKAAAVDGLGGAGAADAAPAGEAAAARVRP. Residues 37 to 57 traverse the membrane as a helical segment; it reads VETLLRAAPLGLCVAAMTVML. Over 58–78 the chain is Extracellular; that stretch reads RDQQSNEYGTVAYSDLGGFKY. A helical membrane pass occupies residues 79–99; sequence LVYANGLCAAYSLVSAFYTAV. Residues 100 to 108 are Cytoplasmic-facing; it reads PRPATVSRS. Residues 109-129 form a helical membrane-spanning segment; sequence WVVFLLDQVFTYLILAAGAAA. The Extracellular segment spans residues 130 to 161; the sequence is AELLYLAYNGDKEVTWSEACGVFGSFCRQART. Residues 162 to 182 form a helical membrane-spanning segment; the sequence is SVAITFGTVLCFILLSLISSY. Residues 183–208 lie on the Cytoplasmic side of the membrane; sequence RLFSAYEAPPSSALGSKGVEIAAYPR.

The protein belongs to the Casparian strip membrane proteins (CASP) family. As to quaternary structure, homodimer and heterodimers.

It localises to the cell membrane. This is CASP-like protein 2A1 from Sorghum bicolor (Sorghum).